The following is a 191-amino-acid chain: Large ribosomal subunit protein uL6 (191 aa).

Belongs to the universal ribosomal protein uL6 family. In terms of assembly, component of the large ribosomal subunit. Mature ribosomes consist of a small (40S) and a large (60S) subunit. The 40S subunit contains about 32 different proteins and 1 molecule of RNA (18S). The 60S subunit contains 45 different proteins and 3 molecules of RNA (25S, 5.8S and 5S).

The protein resides in the cytoplasm. Component of the ribosome, a large ribonucleoprotein complex responsible for the synthesis of proteins in the cell. The small ribosomal subunit (SSU) binds messenger RNAs (mRNAs) and translates the encoded message by selecting cognate aminoacyl-transfer RNA (tRNA) molecules. The large subunit (LSU) contains the ribosomal catalytic site termed the peptidyl transferase center (PTC), which catalyzes the formation of peptide bonds, thereby polymerizing the amino acids delivered by tRNAs into a polypeptide chain. The nascent polypeptides leave the ribosome through a tunnel in the LSU and interact with protein factors that function in enzymatic processing, targeting, and the membrane insertion of nascent chains at the exit of the ribosomal tunnel. This Candida albicans (strain SC5314 / ATCC MYA-2876) (Yeast) protein is Large ribosomal subunit protein uL6.